A 530-amino-acid polypeptide reads, in one-letter code: Histone-arginine methyltransferase CARMER (530 aa).

One can recognise an SAM-dependent MTase PRMT-type domain in the interval alanine 141–histidine 450. Residues glutamine 154, arginine 163, glycine 187, glutamate 209, glutamate 238, and threonine 266 each contribute to the S-adenosyl-L-methionine site. Arginine 501 is subject to Asymmetric dimethylarginine; by autocatalysis.

Belongs to the class I-like SAM-binding methyltransferase superfamily. Protein arginine N-methyltransferase family. In terms of assembly, homodimer. In terms of processing, the dimethylated protein is the major form.

Its subcellular location is the cytoplasm. It localises to the nucleus. It catalyses the reaction L-arginyl-[protein] + 2 S-adenosyl-L-methionine = N(omega),N(omega)-dimethyl-L-arginyl-[protein] + 2 S-adenosyl-L-homocysteine + 2 H(+). Its function is as follows. Methylates (mono- and asymmetric dimethylation) the guanidino nitrogens of arginyl residues in proteins. May methylate histone H3 at 'Arg-17' and activate transcription via chromatin remodeling. The protein is Histone-arginine methyltransferase CARMER (Art4) of Drosophila simulans (Fruit fly).